We begin with the raw amino-acid sequence, 277 residues long: Ras suppressor protein 1 (277 aa).

The tract at residues Met1 to Ser23 is disordered. At Ser2 the chain carries N-acetylserine. Basic and acidic residues predominate over residues Lys7–Ser23. LRR repeat units lie at residues His41–Lys63, Asn64–Leu85, Lys87–Pro109, Ala110–Leu133, Thr135–Leu156, Lys158–Leu179, and Gln181–Leu202. The disordered stretch occupies residues Met250 to Lys277. Residues Pro256–Lys265 show a composition bias toward basic and acidic residues.

Functionally, potentially plays a role in the Ras signal transduction pathway. Capable of suppressing v-Ras transformation in vitro. In Bos taurus (Bovine), this protein is Ras suppressor protein 1 (RSU1).